The primary structure comprises 314 residues: ATP synthase gamma chain (314 aa).

This sequence belongs to the ATPase gamma chain family. As to quaternary structure, F-type ATPases have 2 components, CF(1) - the catalytic core - and CF(0) - the membrane proton channel. CF(1) has five subunits: alpha(3), beta(3), gamma(1), delta(1), epsilon(1). CF(0) has three main subunits: a, b and c.

The protein localises to the cellular thylakoid membrane. Produces ATP from ADP in the presence of a proton gradient across the membrane. The gamma chain is believed to be important in regulating ATPase activity and the flow of protons through the CF(0) complex. The protein is ATP synthase gamma chain of Rippkaea orientalis (strain PCC 8801 / RF-1) (Cyanothece sp. (strain PCC 8801)).